Here is a 232-residue protein sequence, read N- to C-terminus: Small ribosomal subunit protein uS3 (232 aa).

Positions 39–107 constitute a KH type-2 domain; that stretch reads VRQYLTKALK…PAQINIAEVR (69 aa).

The protein belongs to the universal ribosomal protein uS3 family. Part of the 30S ribosomal subunit. Forms a tight complex with proteins S10 and S14.

In terms of biological role, binds the lower part of the 30S subunit head. Binds mRNA in the 70S ribosome, positioning it for translation. In Pseudoalteromonas atlantica (strain T6c / ATCC BAA-1087), this protein is Small ribosomal subunit protein uS3.